The sequence spans 273 residues: Rhamnulose-1-phosphate aldolase (273 aa).

Glu-117 is an active-site residue. His-140, His-142, and His-211 together coordinate Zn(2+).

Belongs to the aldolase class II family. RhaD subfamily. The cofactor is Zn(2+).

Its subcellular location is the cytoplasm. It catalyses the reaction L-rhamnulose 1-phosphate = (S)-lactaldehyde + dihydroxyacetone phosphate. The protein operates within carbohydrate degradation; L-rhamnose degradation; glycerone phosphate from L-rhamnose: step 3/3. Functionally, catalyzes the reversible cleavage of L-rhamnulose-1-phosphate to dihydroxyacetone phosphate (DHAP) and L-lactaldehyde. The sequence is that of Rhamnulose-1-phosphate aldolase from Listeria monocytogenes serotype 4a (strain HCC23).